A 373-amino-acid polypeptide reads, in one-letter code: Ferroptosis suppressor protein 1 (373 aa).

Residue Gly2 is the site of N-myristoyl glycine attachment. A helical membrane pass occupies residues Val7–Ala27. 6-hydroxy-FAD is bound by residues Gly18–Gly22, Arg54, and Val82. Lys168 bears the N6-acetyllysine mark. Asp285 is a binding site for 6-hydroxy-FAD.

This sequence belongs to the FAD-dependent oxidoreductase family. In terms of assembly, interacts with importin subunits KPNA2 and IPO5; this interaction likely mediates the translocation into the nucleus upon oxidative stress. 6-hydroxy-FAD is required as a cofactor. Post-translationally, N-myristoylation at Gly-2 mediates the recruitment to lipid droplets and plasma membrane. In terms of processing, acetylation at Lys-168 prevents AIFM2 ubiquitination and degradation, thereby inhibiting ferroptosis. KAT2B mediates acetylation at Lys-168, while HDAC3 removes it. Ubiquitinated. AIFM2 undergoes 'Lys-29'-ubiquitination and proteasomal degradation, which is inhibited by acetylation at Lys-168. In terms of tissue distribution, detected in most normal tissues as two transcripts of 1.8 and 4.0 kb in length, respectively. Highly expressed in liver, testis, and kidney, and expressed at lower levels in pancreas, spleen, brain and lung. Expressed in heart (at protein level).

Its subcellular location is the lipid droplet. The protein localises to the cell membrane. It is found in the cytoplasm. The protein resides in the mitochondrion membrane. It localises to the nucleus. The catalysed reaction is ubiquinone-10 + NADH + H(+) = ubiquinol-10 + NAD(+). It carries out the reaction phylloquinone + NADH + H(+) = phylloquinol + NAD(+). The enzyme catalyses menaquinone-4 + NADH + H(+) = menaquinol-4 + NAD(+). It catalyses the reaction menadione + NADH + H(+) = menadiol + NAD(+). Its activity is regulated as follows. The modification by 4-hydroxy-2-nonenal (HNE) adduction in mitochondria results in loss of the oxidoreductase activity and activation of a novel function in mitochondrial oxidative stress signaling. In terms of biological role, a NAD(P)H-dependent oxidoreductase that acts as a key inhibitor of ferroptosis. At the plasma membrane, catalyzes reduction of coenzyme Q/ubiquinone-10 to ubiquinol-10, a lipophilic radical-trapping antioxidant that prevents lipid oxidative damage and consequently ferroptosis. Acts in parallel to GPX4 to suppress phospholipid peroxidation and ferroptosis. This anti-ferroptotic function is independent of cellular glutathione levels. Also acts as a potent radical-trapping antioxidant by mediating warfarin-resistant vitamin K reduction in the canonical vitamin K cycle: catalyzes NAD(P)H-dependent reduction of vitamin K (phylloquinone, menaquinone-4 and menadione) to hydroquinone forms. Hydroquinones act as potent radical-trapping antioxidants inhibitor of phospholipid peroxidation and ferroptosis. May play a role in mitochondrial stress signaling. Upon oxidative stress, associates with the lipid peroxidation end product 4-hydroxy-2-nonenal (HNE) forming a lipid adduct devoid of oxidoreductase activity, which then translocates from mitochondria into the nucleus triggering DNA damage and cell death. This Mus musculus (Mouse) protein is Ferroptosis suppressor protein 1.